A 271-amino-acid chain; its full sequence is Peroxiredoxin-4 (271 aa).

The first 37 residues, 1–37 (MEALPLLAATTPDHGRHRRLLLLPLLLFLLPAGAVQG), serve as a signal peptide directing secretion. The 159-residue stretch at 79 to 237 (AKISKPAPYW…TLRLVQAFQY (159 aa)) folds into the Thioredoxin domain. The active-site Cysteine sulfenic acid (-SOH) intermediate is the C124.

The protein belongs to the peroxiredoxin family. AhpC/Prx1 subfamily. As to quaternary structure, homodimer; disulfide-linked, upon oxidation. 5 homodimers assemble to form a ring-like decamer. Can form heterodimers with PRDX1. Post-translationally, the enzyme can be inactivated by further oxidation of the cysteine sulfenic acid (C(P)-SOH) to sulphinic acid (C(P)-SO2H) and sulphonic acid (C(P)-SO3H) instead of its condensation to a disulfide bond.

The protein resides in the cytoplasm. Its subcellular location is the endoplasmic reticulum. It catalyses the reaction a hydroperoxide + [thioredoxin]-dithiol = an alcohol + [thioredoxin]-disulfide + H2O. Thiol-specific peroxidase that catalyzes the reduction of hydrogen peroxide and organic hydroperoxides to water and alcohols, respectively. Plays a role in cell protection against oxidative stress by detoxifying peroxides and as sensor of hydrogen peroxide-mediated signaling events. Regulates the activation of NF-kappa-B in the cytosol by a modulation of I-kappa-B-alpha phosphorylation. The polypeptide is Peroxiredoxin-4 (PRDX4) (Homo sapiens (Human)).